A 344-amino-acid chain; its full sequence is RNA-binding protein squid (344 aa).

The tract at residues M1–D55 is disordered. Residues G36–S49 show a composition bias toward polar residues. RRM domains lie at R56–I138 and G136–P213. S148 bears the Phosphoserine mark. Disordered stretches follow at residues K214–Y238 and G301–Y344. The segment at P215–Y254 is M9-like motif. Gly residues-rich tracts occupy residues G222–Y238 and G301–R337. The segment at G300 to Q338 is M9 motif.

In terms of assembly, interacts with bru1/Bruno; the interaction is direct but weak, and may play a role in regulation of grk mRNA localization and translation. As to quaternary structure, interacts (probably via M9 and M9-like motifs) with Tnpo/Transportin; the interaction is direct and is involved in nuclear localization. Interacts with fs(1)K10 (via N-terminus); may be involved in localization of sqd in the oocyte during oogenesis. Interacts (via C-terminus) with Hrb27C; the interaction is RNA dependent. Does not interact with Tnpo/Transportin. Interacts with fs(1)K10 (via N-terminus); may be involved in localization of sqd in the oocyte during oogenesis. In terms of assembly, interacts (probably via M9-like motif) with Tnpo/Transportin; the interaction is direct and is involved in nuclear localization. Interacts with fs(1)K10 (via N-terminus); may be involved in localization of sqd in the oocyte during oogenesis.

Its subcellular location is the nucleus. The protein localises to the cytoplasm. In terms of biological role, component of ribonucleosomes. Could be needed to organize a concentration gradient of a dorsalizing morphogen (Dm) originating in the germinal vesicle. At least one of the isoforms is essential in somatic tissues. Interacts with grk mRNA (via 3' UTR) and involved in its localization to the dorsal anterior region of the oocyte during dorsal-ventral axis determination; may function as a ribonuclear protein complex together with otu and Hrb27C. Required for polytene chromosome dispersal in nurse cells during oogenesis; nuclear isoforms play a greater role in this than cytoplasmic isoforms. Required nonredundantly with isoform A/sqdA for dorsoventral pattern determination during oogenesis. May be important in somatic tissues. Its function is as follows. Required nonredundantly with isoform B/SqdS for dorsoventral pattern determination during oogenesis. Functionally, may lack a role in dorsoventral pattern determination during oogenesis. May be important in somatic tissues. The sequence is that of RNA-binding protein squid from Drosophila melanogaster (Fruit fly).